A 294-amino-acid chain; its full sequence is tRNA pseudouridine synthase B (294 aa).

Residue Asp-39 is the Nucleophile of the active site.

It belongs to the pseudouridine synthase TruB family. Type 1 subfamily.

The enzyme catalyses uridine(55) in tRNA = pseudouridine(55) in tRNA. Responsible for synthesis of pseudouridine from uracil-55 in the psi GC loop of transfer RNAs. This is tRNA pseudouridine synthase B from Streptococcus pyogenes serotype M3 (strain ATCC BAA-595 / MGAS315).